The primary structure comprises 138 residues: ATP synthase epsilon chain, chloroplastic (138 aa).

The protein belongs to the ATPase epsilon chain family. In terms of assembly, F-type ATPases have 2 components, CF(1) - the catalytic core - and CF(0) - the membrane proton channel. CF(1) has five subunits: alpha(3), beta(3), gamma(1), delta(1), epsilon(1). CF(0) has three main subunits: a, b and c.

The protein resides in the plastid. It is found in the chloroplast thylakoid membrane. Produces ATP from ADP in the presence of a proton gradient across the membrane. In Galdieria sulphuraria (Red alga), this protein is ATP synthase epsilon chain, chloroplastic.